Consider the following 51-residue polypeptide: Large ribosomal subunit protein eL39 (51 aa).

The disordered stretch occupies residues Lys-32–Ala-51.

This sequence belongs to the eukaryotic ribosomal protein eL39 family.

In Pyrobaculum arsenaticum (strain DSM 13514 / JCM 11321 / PZ6), this protein is Large ribosomal subunit protein eL39.